Reading from the N-terminus, the 278-residue chain is 3-methyl-2-oxobutanoate hydroxymethyltransferase (278 aa).

Residues D43 and D82 each coordinate Mg(2+). 3-methyl-2-oxobutanoate is bound by residues 43–44 (DS), D82, and K112. Position 114 (E114) interacts with Mg(2+). E181 (proton acceptor) is an active-site residue.

This sequence belongs to the PanB family. Homodecamer; pentamer of dimers. It depends on Mg(2+) as a cofactor.

It localises to the cytoplasm. The catalysed reaction is 3-methyl-2-oxobutanoate + (6R)-5,10-methylene-5,6,7,8-tetrahydrofolate + H2O = 2-dehydropantoate + (6S)-5,6,7,8-tetrahydrofolate. It participates in cofactor biosynthesis; (R)-pantothenate biosynthesis; (R)-pantoate from 3-methyl-2-oxobutanoate: step 1/2. Catalyzes the reversible reaction in which hydroxymethyl group from 5,10-methylenetetrahydrofolate is transferred onto alpha-ketoisovalerate to form ketopantoate. The polypeptide is 3-methyl-2-oxobutanoate hydroxymethyltransferase (Desulfitobacterium hafniense (strain Y51)).